We begin with the raw amino-acid sequence, 786 residues long: von Willebrand factor A domain-containing protein 5A (786 aa).

Residues 1-131 (MVHFCGLLTL…KAAVTLKYVQ (131 aa)) form the VIT domain. In terms of domain architecture, VWFA spans 281-462 (EFIFLMDRSG…KALRTLKRSL (182 aa)).

In terms of tissue distribution, expressed at low level in many tissues. Not expressed in 80% of tumor cell lines tested.

Functionally, may play a role in tumorigenesis as a tumor suppressor. Altered expression of this protein and disruption of the molecular pathway it is involved in, may contribute directly to or modify tumorigenesis. The chain is von Willebrand factor A domain-containing protein 5A (VWA5A) from Homo sapiens (Human).